A 189-amino-acid polypeptide reads, in one-letter code: ATP synthase subunit delta (189 aa).

The protein belongs to the ATPase delta chain family. As to quaternary structure, F-type ATPases have 2 components, F(1) - the catalytic core - and F(0) - the membrane proton channel. F(1) has five subunits: alpha(3), beta(3), gamma(1), delta(1), epsilon(1). F(0) has three main subunits: a(1), b(2) and c(10-14). The alpha and beta chains form an alternating ring which encloses part of the gamma chain. F(1) is attached to F(0) by a central stalk formed by the gamma and epsilon chains, while a peripheral stalk is formed by the delta and b chains.

The protein resides in the cell inner membrane. Its function is as follows. F(1)F(0) ATP synthase produces ATP from ADP in the presence of a proton or sodium gradient. F-type ATPases consist of two structural domains, F(1) containing the extramembraneous catalytic core and F(0) containing the membrane proton channel, linked together by a central stalk and a peripheral stalk. During catalysis, ATP synthesis in the catalytic domain of F(1) is coupled via a rotary mechanism of the central stalk subunits to proton translocation. In terms of biological role, this protein is part of the stalk that links CF(0) to CF(1). It either transmits conformational changes from CF(0) to CF(1) or is implicated in proton conduction. The protein is ATP synthase subunit delta of Methylorubrum populi (strain ATCC BAA-705 / NCIMB 13946 / BJ001) (Methylobacterium populi).